The primary structure comprises 646 residues: Zinc finger protein 503 (646 aa).

Residues 1–11 (MSTAPSLSALR) are compositionally biased toward polar residues. A disordered region spans residues 1-70 (MSTAPSLSAL…PPSDPLRQAN (70 aa)). Residues 16–28 (SGGGGGGGGGGGA) are compositionally biased toward gly residues. Low complexity predominate over residues 34–52 (SALSGNSSGPGPGSSPAGS). The residue at position 102 (S102) is a Phosphoserine. The segment at 121–332 (SQIGKPDPSP…PSAPTSSSVL (212 aa)) is disordered. Residues 130 to 139 (PSSKLSSVAS) show a composition bias toward low complexity. 2 stretches are compositionally biased toward gly residues: residues 140 to 152 (NGGG…GGAA) and 189 to 205 (GGGG…GGGV). N6-acetyllysine is present on K209. Polar residues predominate over residues 217–226 (ATCQPFTPRT). Residues 227–240 (GSPSSSASACSPGG) are compositionally biased toward low complexity. S231 and S237 each carry phosphoserine. The segment covering 250-259 (EGKDDKKDTD) has biased composition (basic and acidic residues). Gly residues-rich tracts occupy residues 260–277 (VGGG…GGPT) and 300–315 (GGPG…GGSS). The segment covering 316–330 (GSSSGSGPSAPTSSS) has biased composition (low complexity). A C2H2-type zinc finger spans residues 514–542 (HICNWVSANGPCDKRFATSEELLSHLRTH). At R636 the chain carries Omega-N-methylarginine.

The protein belongs to the Elbow/Noc family.

The protein localises to the nucleus. In terms of biological role, may function as a transcriptional repressor. The chain is Zinc finger protein 503 (ZNF503) from Homo sapiens (Human).